The chain runs to 928 residues: DNA-binding protein RFX6 (928 aa).

2 disordered regions span residues 1-20 and 50-98; these read MAKV…APQL and EGQP…SKTK. The RFX-type winged-helix DNA-binding region spans 124–199; the sequence is TLQWLEENYI…YHYYGIGIKE (76 aa).

It belongs to the RFX family. As to quaternary structure, interacts with RFX3. Expressed in pancreas. Expressed in pancreatic beta-cells (insulin-positive cells) and alpha-cells (glucagon-positive cells) (at protein level). Specifically expressed in pancreas, small intestine and colon. Expressed in endocrine cells in the islets.

The protein localises to the nucleus. Functionally, transcription factor required to direct islet cell differentiation during endocrine pancreas development. Specifically required for the differentiation of 4 of the 5 islet cell types and for the production of insulin. Not required for pancreatic PP (polypeptide-producing) cells differentiation. Acts downstream of NEUROG3 and regulates the transcription factors involved in beta-cell maturation and function, thereby restricting the expression of the beta-cell differentiation and specification genes, and thus the beta-cell fate choice. Activates transcription by forming a heterodimer with RFX3 and binding to the X-box in the promoter of target genes. Involved in glucose-stimulated insulin secretion by promoting insulin and L-type calcium channel gene transcription. The protein is DNA-binding protein RFX6 (RFX6) of Homo sapiens (Human).